The following is a 494-amino-acid chain: Cytochrome P450 2A3 (494 aa).

Position 131 is a phosphoserine (S131). K379 is modified (N6-acetyllysine). Residue C439 participates in heme binding.

It belongs to the cytochrome P450 family. Heme serves as cofactor. As to expression, lung.

The protein localises to the endoplasmic reticulum membrane. The protein resides in the microsome membrane. It carries out the reaction an organic molecule + reduced [NADPH--hemoprotein reductase] + O2 = an alcohol + oxidized [NADPH--hemoprotein reductase] + H2O + H(+). Its function is as follows. Cytochromes P450 are a group of heme-thiolate monooxygenases. In liver microsomes, this enzyme is involved in an NADPH-dependent electron transport pathway. It oxidizes a variety of structurally unrelated compounds, including steroids, fatty acids, and xenobiotics. This Rattus norvegicus (Rat) protein is Cytochrome P450 2A3 (Cyp2a3).